A 779-amino-acid polypeptide reads, in one-letter code: Endonuclease MutS2 (779 aa).

328–335 is an ATP binding site; the sequence is GPNTGGKT. Residues 704-779 form the Smr domain; it reads LDLRGKRYEE…GSGATIVTLG (76 aa).

It belongs to the DNA mismatch repair MutS family. MutS2 subfamily. Homodimer. Binds to stalled ribosomes, contacting rRNA.

Functionally, endonuclease that is involved in the suppression of homologous recombination and thus may have a key role in the control of bacterial genetic diversity. Acts as a ribosome collision sensor, splitting the ribosome into its 2 subunits. Detects stalled/collided 70S ribosomes which it binds and splits by an ATP-hydrolysis driven conformational change. Acts upstream of the ribosome quality control system (RQC), a ribosome-associated complex that mediates the extraction of incompletely synthesized nascent chains from stalled ribosomes and their subsequent degradation. Probably generates substrates for RQC. The polypeptide is Endonuclease MutS2 (Streptococcus pyogenes serotype M49 (strain NZ131)).